We begin with the raw amino-acid sequence, 121 residues long: uncharacterized protein (121 aa).

The interval 101–121 (TVVKKEDVRESPVDTFMENAT) is disordered. The segment covering 102–112 (VVKKEDVRESP) has biased composition (basic and acidic residues).

This is an uncharacterized protein from Schizosaccharomyces pombe (strain 972 / ATCC 24843) (Fission yeast).